Reading from the N-terminus, the 572-residue chain is Proline--tRNA ligase (572 aa).

It belongs to the class-II aminoacyl-tRNA synthetase family. ProS type 1 subfamily. As to quaternary structure, homodimer.

Its subcellular location is the cytoplasm. The enzyme catalyses tRNA(Pro) + L-proline + ATP = L-prolyl-tRNA(Pro) + AMP + diphosphate. Its function is as follows. Catalyzes the attachment of proline to tRNA(Pro) in a two-step reaction: proline is first activated by ATP to form Pro-AMP and then transferred to the acceptor end of tRNA(Pro). As ProRS can inadvertently accommodate and process non-cognate amino acids such as alanine and cysteine, to avoid such errors it has two additional distinct editing activities against alanine. One activity is designated as 'pretransfer' editing and involves the tRNA(Pro)-independent hydrolysis of activated Ala-AMP. The other activity is designated 'posttransfer' editing and involves deacylation of mischarged Ala-tRNA(Pro). The misacylated Cys-tRNA(Pro) is not edited by ProRS. The polypeptide is Proline--tRNA ligase (Salmonella choleraesuis (strain SC-B67)).